A 182-amino-acid polypeptide reads, in one-letter code: Crossover junction endodeoxyribonuclease RuvC (182 aa).

Catalysis depends on residues Asp-7, Glu-67, and Asp-139. Positions 7, 67, and 139 each coordinate Mg(2+).

The protein belongs to the RuvC family. Homodimer which binds Holliday junction (HJ) DNA. The HJ becomes 2-fold symmetrical on binding to RuvC with unstacked arms; it has a different conformation from HJ DNA in complex with RuvA. In the full resolvosome a probable DNA-RuvA(4)-RuvB(12)-RuvC(2) complex forms which resolves the HJ. The cofactor is Mg(2+).

The protein resides in the cytoplasm. The catalysed reaction is Endonucleolytic cleavage at a junction such as a reciprocal single-stranded crossover between two homologous DNA duplexes (Holliday junction).. Functionally, the RuvA-RuvB-RuvC complex processes Holliday junction (HJ) DNA during genetic recombination and DNA repair. Endonuclease that resolves HJ intermediates. Cleaves cruciform DNA by making single-stranded nicks across the HJ at symmetrical positions within the homologous arms, yielding a 5'-phosphate and a 3'-hydroxyl group; requires a central core of homology in the junction. The consensus cleavage sequence is 5'-(A/T)TT(C/G)-3'. Cleavage occurs on the 3'-side of the TT dinucleotide at the point of strand exchange. HJ branch migration catalyzed by RuvA-RuvB allows RuvC to scan DNA until it finds its consensus sequence, where it cleaves and resolves the cruciform DNA. The protein is Crossover junction endodeoxyribonuclease RuvC of Bordetella parapertussis (strain 12822 / ATCC BAA-587 / NCTC 13253).